A 58-amino-acid polypeptide reads, in one-letter code: Large ribosomal subunit protein bL32 (58 aa).

This sequence belongs to the bacterial ribosomal protein bL32 family.

The polypeptide is Large ribosomal subunit protein bL32 (Thermobifida fusca (strain YX)).